The sequence spans 104 residues: Large ribosomal subunit protein uL24 (104 aa).

The protein belongs to the universal ribosomal protein uL24 family. Part of the 50S ribosomal subunit.

Functionally, one of two assembly initiator proteins, it binds directly to the 5'-end of the 23S rRNA, where it nucleates assembly of the 50S subunit. One of the proteins that surrounds the polypeptide exit tunnel on the outside of the subunit. The sequence is that of Large ribosomal subunit protein uL24 from Buchnera aphidicola subsp. Schizaphis graminum (strain Sg).